Consider the following 459-residue polypeptide: Bifunctional protein GlmU (459 aa).

Residues 1–229 (MSNFAIILAA…FDESLGVNDR (229 aa)) form a pyrophosphorylase region. UDP-N-acetyl-alpha-D-glucosamine is bound by residues 8 to 11 (LAAG), K22, Q72, 77 to 78 (GT), 101 to 102 (GD), G139, E154, N169, and N227. D102 provides a ligand contact to Ca(2+). D102 serves as a coordination point for Mg(2+). A Ca(2+)-binding site is contributed by N227. N227 contacts Mg(2+). The interval 230–250 (VALATAESVMRRRINHKHMVN) is linker. Residues 251–459 (GVSFVNPEAT…TRLPHHPKNQ (209 aa)) form an N-acetyltransferase region. UDP-N-acetyl-alpha-D-glucosamine-binding residues include R332 and K350. H362 acts as the Proton acceptor in catalysis. Y365 and N376 together coordinate UDP-N-acetyl-alpha-D-glucosamine. Residues A379, 385-386 (NY), S404, A422, and R439 each bind acetyl-CoA.

In the N-terminal section; belongs to the N-acetylglucosamine-1-phosphate uridyltransferase family. It in the C-terminal section; belongs to the transferase hexapeptide repeat family. In terms of assembly, homotrimer. Requires Mg(2+) as cofactor. The cofactor is Ca(2+).

It localises to the cytoplasm. The catalysed reaction is alpha-D-glucosamine 1-phosphate + acetyl-CoA = N-acetyl-alpha-D-glucosamine 1-phosphate + CoA + H(+). It catalyses the reaction N-acetyl-alpha-D-glucosamine 1-phosphate + UTP + H(+) = UDP-N-acetyl-alpha-D-glucosamine + diphosphate. The protein operates within nucleotide-sugar biosynthesis; UDP-N-acetyl-alpha-D-glucosamine biosynthesis; N-acetyl-alpha-D-glucosamine 1-phosphate from alpha-D-glucosamine 6-phosphate (route II): step 2/2. Its pathway is nucleotide-sugar biosynthesis; UDP-N-acetyl-alpha-D-glucosamine biosynthesis; UDP-N-acetyl-alpha-D-glucosamine from N-acetyl-alpha-D-glucosamine 1-phosphate: step 1/1. It functions in the pathway bacterial outer membrane biogenesis; LPS lipid A biosynthesis. Catalyzes the last two sequential reactions in the de novo biosynthetic pathway for UDP-N-acetylglucosamine (UDP-GlcNAc). The C-terminal domain catalyzes the transfer of acetyl group from acetyl coenzyme A to glucosamine-1-phosphate (GlcN-1-P) to produce N-acetylglucosamine-1-phosphate (GlcNAc-1-P), which is converted into UDP-GlcNAc by the transfer of uridine 5-monophosphate (from uridine 5-triphosphate), a reaction catalyzed by the N-terminal domain. This is Bifunctional protein GlmU from Streptococcus pneumoniae serotype 4 (strain ATCC BAA-334 / TIGR4).